Reading from the N-terminus, the 386-residue chain is Methionine aminopeptidase 1 (386 aa).

Ala2 is modified (N-acetylalanine). The C6H2-type zinc finger occupies 6–59 (TRVCETDGCSSEAKLQCPTCIKLGIQGSYFCSQECFKGSWATHKLLHKKAKDEK). 9 residues coordinate Zn(2+): Cys9, Cys14, Cys22, Cys25, Cys36, Cys40, His48, His52, and Lys53. Residue His203 participates in a protein binding. Residues Asp220, Asp231, and His294 each coordinate Zn(2+). A protein is bound at residue His301. Zn(2+)-binding residues include Glu327 and Glu358.

This sequence belongs to the peptidase M24A family. Methionine aminopeptidase type 1 subfamily. In terms of assembly, associates with the 60S ribosomal subunit of the 80S translational complex. Zn(2+) is required as a cofactor. Requires Co(2+) as cofactor. It depends on Mn(2+) as a cofactor. Fe(2+) serves as cofactor.

Its subcellular location is the cytoplasm. It carries out the reaction Release of N-terminal amino acids, preferentially methionine, from peptides and arylamides.. Functionally, cotranslationally removes the N-terminal methionine from nascent proteins. The N-terminal methionine is often cleaved when the second residue in the primary sequence is small and uncharged (Met-Ala-, Cys, Gly, Pro, Ser, Thr, or Val). This is Methionine aminopeptidase 1 (Metap1) from Mus musculus (Mouse).